We begin with the raw amino-acid sequence, 140 residues long: MAMTVHCDVVSAEEKIYSGLVEMLIATGTEGELGIQYGHAPLLSELKPGAVRIIKQGGSEEILYVSGGYLEVQPNLVTLMADTAVRAKDVDEAAALEAQKQAEKALANKTGEFEYSRAAAELAEAAAQLRTIQKLRKHLR.

The protein belongs to the ATPase epsilon chain family. F-type ATPases have 2 components, CF(1) - the catalytic core - and CF(0) - the membrane proton channel. CF(1) has five subunits: alpha(3), beta(3), gamma(1), delta(1), epsilon(1). CF(0) has three main subunits: a, b and c.

The protein localises to the cell inner membrane. In terms of biological role, produces ATP from ADP in the presence of a proton gradient across the membrane. This is ATP synthase epsilon chain from Marinobacter nauticus (strain ATCC 700491 / DSM 11845 / VT8) (Marinobacter aquaeolei).